Reading from the N-terminus, the 376-residue chain is 5-amino-6-(D-ribitylamino)uracil--L-tyrosine 4-hydroxyphenyl transferase 1 (376 aa).

Residues 50–275 (VTYVVNRNIN…PGLEDLKVYA (226 aa)) enclose the Radical SAM core domain. Residues cysteine 64, cysteine 68, and cysteine 71 each coordinate [4Fe-4S] cluster.

The protein belongs to the radical SAM superfamily. CofH family. In terms of assembly, consists of two subunits, CofG and CofH. [4Fe-4S] cluster is required as a cofactor.

The catalysed reaction is 5-amino-6-(D-ribitylamino)uracil + L-tyrosine + S-adenosyl-L-methionine = 5-amino-5-(4-hydroxybenzyl)-6-(D-ribitylimino)-5,6-dihydrouracil + 2-iminoacetate + 5'-deoxyadenosine + L-methionine + H(+). Its pathway is cofactor biosynthesis; coenzyme F0 biosynthesis. Functionally, catalyzes the radical-mediated synthesis of 5-amino-5-(4-hydroxybenzyl)-6-(D-ribitylimino)-5,6-dihydrouracil from 5-amino-6-(D-ribitylamino)uracil and L-tyrosine. The protein is 5-amino-6-(D-ribitylamino)uracil--L-tyrosine 4-hydroxyphenyl transferase 1 of Methanosarcina mazei (strain ATCC BAA-159 / DSM 3647 / Goe1 / Go1 / JCM 11833 / OCM 88) (Methanosarcina frisia).